The following is a 941-amino-acid chain: HMG box transcription factor BBX (941 aa).

A compositionally biased stretch (basic and acidic residues) spans 1–18; sequence MKGSNRNKDHSAEGEGVG. Disordered regions lie at residues 1–21, 39–80, 157–200, and 221–242; these read MKGS…GKRP, FSEE…EQRA, VKSP…FGMA, and TPEV…LRQK. Composition is skewed to acidic residues over residues 39–52 and 63–75; these read FSEE…EEDI and LEQD…DDES. Positions 80-148 form a DNA-binding region, HMG box; it reads ARRPMNAFLL…AFMKANPGYK (69 aa). Residues 177 to 191 show a composition bias toward basic and acidic residues; sequence SSRDLPSPKKAKTEE. At S243 the chain carries Phosphoserine. The stretch at 326–370 forms a coiled coil; it reads GRIKELEKGKEEKEIKMEKTDETRLQKEAEFEKSAKENLRDSKEL. K385 is covalently cross-linked (Glycyl lysine isopeptide (Lys-Gly) (interchain with G-Cter in SUMO2)). A disordered region spans residues 438-482; the sequence is IEDPAALNKPEKLKKKKKKSKMDRHGNDKSTPKKTCKKRQSSESD. Residues 449 to 459 are compositionally biased toward basic residues; it reads KLKKKKKKSKM. Phosphoserine is present on residues S478 and S485. 2 stretches are compositionally biased toward basic and acidic residues: residues 499-508 and 536-552; these read GIEKLGDTPR and KKMS…ESRP. Disordered stretches follow at residues 499 to 600 and 635 to 677; these read GIEK…SDCH and NVDR…KKTK. A Glycyl lysine isopeptide (Lys-Gly) (interchain with G-Cter in SUMO2) cross-link involves residue K573. Over residues 661–670 the composition is skewed to low complexity; the sequence is TFSQSGTSGS. A Glycyl lysine isopeptide (Lys-Gly) (interchain with G-Cter in SUMO2) cross-link involves residue K696. S704 carries the post-translational modification Phosphoserine. Disordered regions lie at residues 714-771, 803-888, and 912-941; these read PVPR…DKWS, IPSI…SSTP, and HRGQ…CADQ. Residues 723 to 742 show a composition bias toward polar residues; that stretch reads GNVSSEPTKTSKGPFQSQKK. A compositionally biased stretch (basic residues) spans 743 to 757; that stretch reads NLFHKIVSKYKHKKE. Basic and acidic residues predominate over residues 758–771; sequence KPNVPEKGSGDKWS. Positions 805 to 817 are enriched in polar residues; the sequence is SIFNTPEPTTTQE. Position 822 is a phosphoserine (S822). Over residues 823–834 the composition is skewed to basic residues; it reads QKRKARKTKITH. Phosphoserine is present on S844. Residues 866–882 are compositionally biased toward basic and acidic residues; that stretch reads TETDCNDKCSHNTEVGE.

It localises to the nucleus. In terms of biological role, transcription factor that is necessary for cell cycle progression from G1 to S phase. The sequence is that of HMG box transcription factor BBX (BBX) from Homo sapiens (Human).